A 719-amino-acid polypeptide reads, in one-letter code: MPTSISTAPLSQGSPPSSLIDYQPQSVPSSSSPPPSTAAAAAAAVVVAVPSSSSPVDLGLPSFTSTSSLITSDVPATTTTPSFTGSVIGSISRRNRRSFAALAREKTSSALANLSSIGSTTNSSLRQSASSGSLQKHSRKASQLSVGEISGFVPLSPPLSDGSGSSEQSSSAPFEPLSAVTEQPNPAAERRRQTIQLVPPISENIPVSPAKMHQTSSRLLRMTEDDRPFTKDFMDLFSTLMVSLKLDSHRVRFTKYDHTFTSEEAINNLGSLKFSQSNRMPDPKDPSRIVTTTTTTTFSMAKEMARSVCQRFVDARFIESVDGKYSHTFPLKGALYQLTPKGINILQRFCQRNGITARHVIDVLESPRNTMQLVNLERDTETDKLSHDRATIEVIFRRFAGQDGPNVKSSVSSSDSDSLSDYSNGLVGVKMARERKVGDKICANTFTGKAAVDWLMDCSTTIEPRETVLIAELFVKYGLITVLQEDRSMPQVENSLVAFQPSKNAIYAITERGQRVCGWLARDKPRDTTTYDSRGIPRDSNNARLNHILQDPALRLLFREFLRFSLCEENLSFYIDVSEFTTQYHKFDKVGHFKKPDAVRETLAAAYGLYNAFLAPGSPCELNIDHALRNSLASRMTKAVGDDDSMLKSLQEVVQLFEMAQTSVFKLMSSDSVPKFLRDPKYSAILQEHDVDDLIGGGRSYSPTPGNVPERSMSRSQRS.

Residues 1-17 are compositionally biased toward polar residues; that stretch reads MPTSISTAPLSQGSPPS. Disordered regions lie at residues 1 to 39, 117 to 141, and 155 to 190; these read MPTS…STAA, IGST…SRKA, and LSPP…AAER. Low complexity-rich tracts occupy residues 123-135 and 158-171; these read SSLR…GSLQ and PLSD…QSSS. The segment at 214–411 is fungal-DR; that stretch reads QTSSRLLRMT…QDGPNVKSSV (198 aa). In terms of domain architecture, DEP spans 425–511; it reads GLVGVKMARE…SKNAIYAITE (87 aa). Residues 540-685 form the RGS domain; that stretch reads SNNARLNHIL…FLRDPKYSAI (146 aa). Residues 694–719 are disordered; it reads LIGGGRSYSPTPGNVPERSMSRSQRS.

Its function is as follows. Required for asexual sporulation and normal colony development. May be involved in brlA activation. Could play a regulatory role in controlling the flug-initiated signal transduction pathway that triggers the asexual reproduction. This is Developmental regulator flbA (flbA) from Emericella nidulans (strain FGSC A4 / ATCC 38163 / CBS 112.46 / NRRL 194 / M139) (Aspergillus nidulans).